The following is a 119-amino-acid chain: Large ribosomal subunit protein bL20 (119 aa).

The protein belongs to the bacterial ribosomal protein bL20 family.

Functionally, binds directly to 23S ribosomal RNA and is necessary for the in vitro assembly process of the 50S ribosomal subunit. It is not involved in the protein synthesizing functions of that subunit. This Geobacillus sp. (strain WCH70) protein is Large ribosomal subunit protein bL20.